Here is a 637-residue protein sequence, read N- to C-terminus: MLEQIRGPADLQHLSRAQMEDLAREIRDFLIHKVAATGGHLGPNLGVVELTLALHRVFDSPHDPILFDTGHQAYVHKMLTGRSRDFDTLRKKDGLSGYPSRSESEHDWVESSHASSALSYADGLAKAFELNGHRNRHVVAVVGDGALTGGMCWEALNNIAASRRPVVIVVNDNGRSYAPTIGGFAEHLAGLRLQPGYERVLEEGRKAVRGVPMIGEFCYQCMHSIKAGIKDALSPQVMFTDLGLKYVGPIDGHDESAVEGALRHARAFNAPVVVHVVTRKGMGYAPAENDVDEQMHACGVIDPETGLATSVPGPGWTAAFSETLIELAAKRRDIVAITAAMPGPTGLSAFRKRFPDRFFDVGIAEQHAMTSAAGLAMGGMHPVVALYSTFLNRAFDQMLMDVALHKLPVTMVLDRSGITGPDGASHNGMWDLSILGIVPGMRVAAPRDGARLREELAEAVEVKDGPTAVRFPKGDVGEDIPAIERRDGVDVLAVPADGLSDDVLIIAVGAFAAMSVAVAERLRDQGIGVTVVDPRWVLPVPAAINTLAAAHKLVVTVEDNGGHGGVGSAVSAALRRAEIDVPCRDAALPQAFFDHASRGEVLAEVGLTERTIARQITGWVAALGATAGDRQVSESVD.

Thiamine diphosphate is bound by residues His-71 and Ser-112 to Ala-114. Asp-144 provides a ligand contact to Mg(2+). Residues Gly-145–Ala-146, Asn-173, Tyr-284, and Glu-365 contribute to the thiamine diphosphate site. Asn-173 contributes to the Mg(2+) binding site.

Belongs to the transketolase family. DXPS subfamily. In terms of assembly, homodimer. Mg(2+) is required as a cofactor. The cofactor is thiamine diphosphate.

The enzyme catalyses D-glyceraldehyde 3-phosphate + pyruvate + H(+) = 1-deoxy-D-xylulose 5-phosphate + CO2. The protein operates within metabolic intermediate biosynthesis; 1-deoxy-D-xylulose 5-phosphate biosynthesis; 1-deoxy-D-xylulose 5-phosphate from D-glyceraldehyde 3-phosphate and pyruvate: step 1/1. In terms of biological role, catalyzes the acyloin condensation reaction between C atoms 2 and 3 of pyruvate and glyceraldehyde 3-phosphate to yield 1-deoxy-D-xylulose-5-phosphate (DXP). The protein is 1-deoxy-D-xylulose-5-phosphate synthase of Mycolicibacterium gilvum (strain PYR-GCK) (Mycobacterium gilvum (strain PYR-GCK)).